Reading from the N-terminus, the 974-residue chain is UvrABC system protein A (974 aa).

34-41 (GLSGSGKS) contacts ATP. ABC transporter domains follow at residues 331-610 (WARS…TNSL) and 630-959 (ISKT…QFLK). 663–670 (GVSGGGKS) is an ATP binding site. The C4-type zinc-finger motif lies at 762 to 788 (CEACQGDGVIKIEMHFLPDVYVTCDVC).

It belongs to the ABC transporter superfamily. UvrA family. Forms a heterotetramer with UvrB during the search for lesions.

Its subcellular location is the cytoplasm. Its function is as follows. The UvrABC repair system catalyzes the recognition and processing of DNA lesions. UvrA is an ATPase and a DNA-binding protein. A damage recognition complex composed of 2 UvrA and 2 UvrB subunits scans DNA for abnormalities. When the presence of a lesion has been verified by UvrB, the UvrA molecules dissociate. The sequence is that of UvrABC system protein A from Brucella melitensis biotype 1 (strain ATCC 23456 / CCUG 17765 / NCTC 10094 / 16M).